We begin with the raw amino-acid sequence, 355 residues long: Guanine nucleotide-binding protein G(z) subunit alpha (355 aa).

The span at 1–14 (MGCRQSSEEKEAAR) shows a compositional bias: basic and acidic residues. The interval 1–26 (MGCRQSSEEKEAARRSRRIDRHLRSE) is disordered. Residue Gly2 is the site of N-myristoyl glycine attachment. Cys3 is lipidated: S-palmitoyl cysteine. In terms of domain architecture, G-alpha spans 32-355 (REIKLLLLGT…QNNLKYIGLC (324 aa)). The interval 35 to 48 (KLLLLGTSNSGKST) is G1 motif. GTP contacts are provided by residues 40 to 47 (GTSNSGKS), 176 to 182 (LRSRDMT), 201 to 205 (DVGGQ), 270 to 273 (NKKD), and Ala327. Mg(2+)-binding residues include Ser47 and Thr182. The segment at 174 to 182 (DILRSRDMT) is G2 motif. The G3 motif stretch occupies residues 197–206 (FKMVDVGGQR). Residues 266–273 (ILFLNKKD) are G4 motif. A G5 motif region spans residues 325–330 (TCATDT).

The protein belongs to the G-alpha family. G(i/o/t/z) subfamily. In terms of assembly, G-proteins are composed of 3 units; alpha, beta and gamma. The alpha chain contains the guanine nucleotide binding site. Interacts with ADGRB2.

It localises to the membrane. Functionally, guanine nucleotide-binding proteins (G proteins) are involved as modulators or transducers in various transmembrane signaling systems. The protein is Guanine nucleotide-binding protein G(z) subunit alpha (Gnaz) of Rattus norvegicus (Rat).